The following is an 858-amino-acid chain: Translation initiation factor IF-2 (858 aa).

The tract at residues 49-271 (TTTVTHPKSQ…NKPAPVRKDK (223 aa)) is disordered. The segment covering 80-226 (NQQQSNSRHQ…RFGGSLNSNN (147 aa)) has biased composition (low complexity). The span at 239–256 (NRRRNNRNNKSRNNKNQR) shows a compositional bias: basic residues. The 170-residue stretch at 359 to 528 (PRAPVVTVMG…LLQSEVLELT (170 aa)) folds into the tr-type G domain. The G1 stretch occupies residues 368–375 (GHVDHGKT). 368–375 (GHVDHGKT) contacts GTP. Residues 393–397 (GITQA) form a G2 region. The tract at residues 414–417 (DTPG) is G3. GTP is bound by residues 414 to 418 (DTPGH) and 468 to 471 (NKID). The segment at 468–471 (NKID) is G4. Residues 504–506 (SAK) form a G5 region.

This sequence belongs to the TRAFAC class translation factor GTPase superfamily. Classic translation factor GTPase family. IF-2 subfamily.

It localises to the cytoplasm. In terms of biological role, one of the essential components for the initiation of protein synthesis. Protects formylmethionyl-tRNA from spontaneous hydrolysis and promotes its binding to the 30S ribosomal subunits. Also involved in the hydrolysis of GTP during the formation of the 70S ribosomal complex. The sequence is that of Translation initiation factor IF-2 from Lactiplantibacillus plantarum (strain ATCC BAA-793 / NCIMB 8826 / WCFS1) (Lactobacillus plantarum).